The following is a 275-amino-acid chain: Intercellular adhesion molecule 2 (275 aa).

Residues 1-24 form the signal peptide; it reads MSSFGYRTLTVALFALICCPGSDE. At 25–223 the chain is on the extracellular side; it reads KVFEVHVRPK…EIYEPVSDSQ (199 aa). The Ig-like C2-type 1 domain occupies 41-98; the sequence is KASLEVNCSTTCNQPEVGGLETSLDKILLDEQAQWKHYLVSNISHDTVLQCHFTCSGK. Asn-47, Asn-82, Asn-105, Asn-153, Asn-158, Asn-176, and Asn-187 each carry an N-linked (GlcNAc...) asparagine glycan. 2 cysteine pairs are disulfide-bonded: Cys-48-Cys-91 and Cys-52-Cys-95. Positions 127-197 constitute an Ig-like C2-type 2 domain; that stretch reads GKSFTIECRV…FSCLAVLDLI (71 aa). A disulfide bond links Cys-134 and Cys-190. Residues 224–248 traverse the membrane as a helical segment; sequence MVIIVTVVSVLLSLFVTSVLLCFIF. Over 249-275 the chain is Cytoplasmic; sequence GQHLRQQRMGTYGVRAAWRRLPQAFRP. Residues 251–275 form a required for interaction with EZR, MSN and RDX and co-localization to microvilli region; that stretch reads HLRQQRMGTYGVRAAWRRLPQAFRP.

It belongs to the immunoglobulin superfamily. ICAM family. In terms of assembly, interacts with RDX, EZR and MSN.

It is found in the membrane. The protein localises to the cell projection. Its subcellular location is the microvillus. Functionally, ICAM proteins are ligands for the leukocyte adhesion protein LFA-1 (integrin alpha-L/beta-2). ICAM2 may play a role in lymphocyte recirculation by blocking LFA-1-dependent cell adhesion. It mediates adhesive interactions important for antigen-specific immune response, NK-cell mediated clearance, lymphocyte recirculation, and other cellular interactions important for immune response and surveillance. This Gorilla gorilla gorilla (Western lowland gorilla) protein is Intercellular adhesion molecule 2 (ICAM2).